A 465-amino-acid polypeptide reads, in one-letter code: Uronate isomerase (465 aa).

Belongs to the metallo-dependent hydrolases superfamily. Uronate isomerase family.

The enzyme catalyses D-glucuronate = D-fructuronate. It carries out the reaction aldehydo-D-galacturonate = keto-D-tagaturonate. It participates in carbohydrate metabolism; pentose and glucuronate interconversion. The polypeptide is Uronate isomerase (Streptococcus equi subsp. equi (strain 4047)).